A 195-amino-acid polypeptide reads, in one-letter code: Archaetidylinositol phosphate synthase (195 aa).

2 consecutive transmembrane segments (helical) span residues 27–47 (IALPADYITLTGFLVACAASA) and 54–74 (LITGAALLAASGFIDVLDGAV). Mg(2+) is bound by residues aspartate 68, aspartate 71, aspartate 89, and aspartate 93. Aspartate 93 (proton acceptor) is an active-site residue. 2 consecutive transmembrane segments (helical) span residues 99–119 (IIIIGITAGGFTGLLTGLLAL) and 158–178 (LAGYLIHPWFMDAAIIVLAAL).

The protein belongs to the CDP-alcohol phosphatidyltransferase class-I family. Mn(2+) is required as a cofactor. Mg(2+) serves as cofactor.

Its subcellular location is the cell membrane. It catalyses the reaction CDP-2,3-bis-O-(phytanyl)-sn-glycerol + 1D-myo-inositol 3-phosphate = saturated 1-archaetidyl-1D-myo-inositol 3-phosphate + CMP + H(+). Its pathway is lipid metabolism; phospholipid metabolism. Its function is as follows. Catalyzes the formation of archaetidylinositol phosphate (AIP) from CDP-archaeol (CDP-ArOH or CDP-2,3-bis-(O-phytanyl)-sn-glycerol) and 1L-myo-inositol 1-phosphate (IP or 1D-myo-inositol 3-phosphate). AIP is a precursor of archaetidyl-myo-inositol (AI), an ether-type inositol phospholipid ubiquitously distributed in archaea membranes and essential for glycolipid biosynthesis in archaea. The sequence is that of Archaetidylinositol phosphate synthase from Methanothermobacter thermautotrophicus (strain ATCC 29096 / DSM 1053 / JCM 10044 / NBRC 100330 / Delta H) (Methanobacterium thermoautotrophicum).